The primary structure comprises 360 residues: DNA replication and repair protein RecF (360 aa).

Residue 30 to 37 coordinates ATP; that stretch reads GQNGSGKT.

Belongs to the RecF family.

Its subcellular location is the cytoplasm. Functionally, the RecF protein is involved in DNA metabolism; it is required for DNA replication and normal SOS inducibility. RecF binds preferentially to single-stranded, linear DNA. It also seems to bind ATP. The polypeptide is DNA replication and repair protein RecF (Shewanella oneidensis (strain ATCC 700550 / JCM 31522 / CIP 106686 / LMG 19005 / NCIMB 14063 / MR-1)).